Reading from the N-terminus, the 314-residue chain is Aspartate carbamoyltransferase catalytic subunit (314 aa).

The carbamoyl phosphate site is built by Arg55 and Thr56. Lys83 is an L-aspartate binding site. Carbamoyl phosphate contacts are provided by Arg105, His139, and Gln142. L-aspartate contacts are provided by Arg172 and Arg226. Carbamoyl phosphate contacts are provided by Gly267 and Pro268.

The protein belongs to the aspartate/ornithine carbamoyltransferase superfamily. ATCase family. Heterododecamer (2C3:3R2) of six catalytic PyrB chains organized as two trimers (C3), and six regulatory PyrI chains organized as three dimers (R2).

The enzyme catalyses carbamoyl phosphate + L-aspartate = N-carbamoyl-L-aspartate + phosphate + H(+). The protein operates within pyrimidine metabolism; UMP biosynthesis via de novo pathway; (S)-dihydroorotate from bicarbonate: step 2/3. Its function is as follows. Catalyzes the condensation of carbamoyl phosphate and aspartate to form carbamoyl aspartate and inorganic phosphate, the committed step in the de novo pyrimidine nucleotide biosynthesis pathway. The protein is Aspartate carbamoyltransferase catalytic subunit of Rhodococcus opacus (strain B4).